The sequence spans 140 residues: UPF0179 protein Msp_0996 (140 aa).

The protein belongs to the UPF0179 family.

This Methanosphaera stadtmanae (strain ATCC 43021 / DSM 3091 / JCM 11832 / MCB-3) protein is UPF0179 protein Msp_0996.